Here is a 176-residue protein sequence, read N- to C-terminus: Disulfide bond formation protein B (176 aa).

At 1-14 the chain is on the cytoplasmic side; sequence MLQFLNRCSKGRGA. A helical transmembrane segment spans residues 15–31; it reads WLLMALTALVLELVALY. The Periplasmic segment spans residues 32–49; the sequence is FQHVMLLQPCVMCIYERA. Cys-41 and Cys-44 are disulfide-bonded. The chain crosses the membrane as a helical span at residues 50 to 65; sequence ALFGILGASLLGAIAP. Residues 66-71 lie on the Cytoplasmic side of the membrane; the sequence is KSPLRY. Residues 72–89 traverse the membrane as a helical segment; sequence LAIFIWIYSAWKGVQLAW. The Periplasmic portion of the chain corresponds to 90-144; it reads THTMLQLHPSPFTTCDFFVSFPSWLPLDKWFPAVFVASGDCAVKQWEFLSLEMPQ. Cys-104 and Cys-130 are disulfide-bonded. A helical membrane pass occupies residues 145-163; it reads WLVGIFAAYLFIAILVLIS. The Cytoplasmic segment spans residues 164 to 176; sequence QFVKPKRRDLFSR.

The protein belongs to the DsbB family.

The protein localises to the cell inner membrane. In terms of biological role, required for disulfide bond formation in some periplasmic proteins. Acts by oxidizing the DsbA protein. The sequence is that of Disulfide bond formation protein B from Yersinia enterocolitica serotype O:8 / biotype 1B (strain NCTC 13174 / 8081).